Consider the following 140-residue polypeptide: Nucleoside diphosphate kinase (140 aa).

Residues Lys-11, Phe-59, Arg-87, Thr-93, Arg-104, and Asn-114 each coordinate ATP. Residue His-117 is the Pros-phosphohistidine intermediate of the active site.

Belongs to the NDK family. In terms of assembly, homotetramer. Requires Mg(2+) as cofactor.

It is found in the cytoplasm. The enzyme catalyses a 2'-deoxyribonucleoside 5'-diphosphate + ATP = a 2'-deoxyribonucleoside 5'-triphosphate + ADP. The catalysed reaction is a ribonucleoside 5'-diphosphate + ATP = a ribonucleoside 5'-triphosphate + ADP. Functionally, major role in the synthesis of nucleoside triphosphates other than ATP. The ATP gamma phosphate is transferred to the NDP beta phosphate via a ping-pong mechanism, using a phosphorylated active-site intermediate. The sequence is that of Nucleoside diphosphate kinase from Rickettsia conorii (strain ATCC VR-613 / Malish 7).